A 587-amino-acid polypeptide reads, in one-letter code: Putative gustatory receptor 59b (587 aa).

The Cytoplasmic segment spans residues 1–4 (MPSY). The chain crosses the membrane as a helical span at residues 5-25 (MAFTPYIMFSTNYAAIAYILI). At 26 to 62 (SRCYRDSMLLDLQRITLEVNREMLRTGKKMNSLIRRM) the chain is on the extracellular side. The helical transmembrane segment at 63–83 (FFLKTFTLTYSCLSYILAVLV) threads the bilayer. Over 84-97 (YQWRAQNWSNLFNG) the chain is Cytoplasmic. A helical membrane pass occupies residues 98-118 (LLVNISLTILVVTTFFYFVSL). Residues 119-277 (MHVARGFDFV…CGLYPVNKAK (159 aa)) lie on the Extracellular side of the membrane. N159 is a glycosylation site (N-linked (GlcNAc...) asparagine). A helical transmembrane segment spans residues 278–298 (WLEMVASIVVHSIMLFQFHLV). Over 299-309 (MRGGYTTLFSR) the chain is Cytoplasmic. A helical transmembrane segment spans residues 310–330 (TYALLANIITLTMLPIVMWQV). Topologically, residues 331 to 403 (RSVFLAKRHY…GIDGVRRSLR (73 aa)) are extracellular. Residues 404–424 (ILLFVKFFTLSWLCITDIIFL) traverse the membrane as a helical segment. Topologically, residues 425–518 (FYSSDAVIWV…IYAPQMLATR (94 aa)) are cytoplasmic. The chain crosses the membrane as a helical span at residues 519 to 539 (FDHFVIGVIQAYWGAVFTFDL). The Extracellular segment spans residues 540-587 (STSFLWVVYGSVQYHVRSLDYYLIDYMCDVAVEYHDSARHSWSEKECY).

It belongs to the insect chemoreceptor superfamily. Gustatory receptor (GR) family. Gr22e subfamily.

The protein localises to the cell membrane. Its function is as follows. Probable gustatory receptor which mediates acceptance or avoidance behavior, depending on its substrates. The chain is Putative gustatory receptor 59b from Drosophila erecta (Fruit fly).